The primary structure comprises 179 residues: Large ribosomal subunit protein uL5 (179 aa).

This sequence belongs to the universal ribosomal protein uL5 family. Part of the 50S ribosomal subunit; part of the 5S rRNA/L5/L18/L25 subcomplex. Contacts the 5S rRNA and the P site tRNA. Forms a bridge to the 30S subunit in the 70S ribosome.

This is one of the proteins that bind and probably mediate the attachment of the 5S RNA into the large ribosomal subunit, where it forms part of the central protuberance. In the 70S ribosome it contacts protein S13 of the 30S subunit (bridge B1b), connecting the 2 subunits; this bridge is implicated in subunit movement. Contacts the P site tRNA; the 5S rRNA and some of its associated proteins might help stabilize positioning of ribosome-bound tRNAs. In Alkalilimnicola ehrlichii (strain ATCC BAA-1101 / DSM 17681 / MLHE-1), this protein is Large ribosomal subunit protein uL5.